We begin with the raw amino-acid sequence, 354 residues long: Inositol-tetrakisphosphate 1-kinase 1 (354 aa).

The span at 1 to 16 (MRVHEEASEDKEREVE) shows a compositional bias: basic and acidic residues. The tract at residues 1–24 (MRVHEEASEDKEREVEEAPDLMPL) is disordered. Residues Lys53 and Lys95 each contribute to the 1D-myo-inositol 1,3,4-trisphosphate site. ATP is bound by residues Arg130 and Lys180. The region spanning 140–347 (LNLSNAYGEV…FLLSLVQNKY (208 aa)) is the ATP-grasp domain. Residues His191 and Lys223 each coordinate 1D-myo-inositol 1,3,4-trisphosphate. ATP contacts are provided by residues 212–223 (QEFVNHGGILFK) and Ser238. 3 residues coordinate Mg(2+): Asp303, Asp318, and Asn320. Residue Asn320 participates in 1D-myo-inositol 1,3,4-trisphosphate binding.

The protein belongs to the ITPK1 family. Monomer. Mg(2+) is required as a cofactor. In terms of tissue distribution, expressed in roots, leaves, flowers, anthers and embryos.

It catalyses the reaction 1D-myo-inositol 3,4,5,6-tetrakisphosphate + ATP = 1D-myo-inositol 1,3,4,5,6-pentakisphosphate + ADP + H(+). The catalysed reaction is 1D-myo-inositol 1,3,4-trisphosphate + ATP = 1D-myo-inositol 1,3,4,5-tetrakisphosphate + ADP + H(+). The enzyme catalyses 1D-myo-inositol 1,3,4-trisphosphate + ATP = 1D-myo-inositol 1,3,4,6-tetrakisphosphate + ADP + H(+). In terms of biological role, kinase that can phosphorylate various inositol polyphosphate such as Ins(3,4,5,6)P4 or Ins(1,3,4)P3 and participates in phytic acid biosynthesis in developing seeds. Phytic acid is the primary storage form of phosphorus in cereal grains and other plant seeds. The protein is Inositol-tetrakisphosphate 1-kinase 1 of Oryza sativa subsp. japonica (Rice).